Reading from the N-terminus, the 804-residue chain is DNA mismatch repair protein MutS (804 aa).

Position 614–621 (614–621 (GPNMAGKS)) interacts with ATP.

It belongs to the DNA mismatch repair MutS family.

This protein is involved in the repair of mismatches in DNA. It is possible that it carries out the mismatch recognition step. This protein has a weak ATPase activity. This is DNA mismatch repair protein MutS from Ehrlichia ruminantium (strain Welgevonden).